An 882-amino-acid polypeptide reads, in one-letter code: Alanine--tRNA ligase (882 aa).

Zn(2+) is bound by residues His-574, His-578, Cys-682, and His-686. The tract at residues 853-882 is disordered; sequence GGRGGGKGALAQGGGLDPRKAREALPGLLP. Positions 854–868 are enriched in gly residues; the sequence is GRGGGKGALAQGGGL.

The protein belongs to the class-II aminoacyl-tRNA synthetase family. Requires Zn(2+) as cofactor.

Its subcellular location is the cytoplasm. The catalysed reaction is tRNA(Ala) + L-alanine + ATP = L-alanyl-tRNA(Ala) + AMP + diphosphate. Its function is as follows. Catalyzes the attachment of alanine to tRNA(Ala) in a two-step reaction: alanine is first activated by ATP to form Ala-AMP and then transferred to the acceptor end of tRNA(Ala). Also edits incorrectly charged Ser-tRNA(Ala) and Gly-tRNA(Ala) via its editing domain. In Thermus thermophilus (strain ATCC BAA-163 / DSM 7039 / HB27), this protein is Alanine--tRNA ligase.